A 329-amino-acid polypeptide reads, in one-letter code: Vacuolar protein sorting-associated protein 26B-like (329 aa).

The protein belongs to the VPS26 family.

It is found in the cytoplasm. It localises to the membrane. Functionally, probable component of the retromer complex, a complex required to retrieve lysosomal enzyme receptors (IGF2R and M6PR) from endosomes to the trans-Golgi network. The polypeptide is Vacuolar protein sorting-associated protein 26B-like (vps26bl) (Danio rerio (Zebrafish)).